The following is a 232-amino-acid chain: Golgi SNAP receptor complex member 1 (232 aa).

The Cytoplasmic segment spans residues 1–211 (MGGSSYDVLR…QRINIKKRRD (211 aa)). Coiled-coil stretches lie at residues 6–23 (YDVL…IDLK) and 52–80 (GEHV…MSDL). The helical; Anchor for type IV membrane protein transmembrane segment at 212–232 (SLILGAVIGFCVILLLLYAFN) threads the bilayer.

It belongs to the GOSR1 family. Component of several multiprotein Golgi SNARE complexes.

Its subcellular location is the golgi apparatus membrane. Its function is as follows. Involved in transport from the ER to the Golgi apparatus as well as in intra-Golgi transport. It belongs to a super-family of proteins called t-SNAREs or soluble NSF (N-ethylmaleimide-sensitive factor) attachment protein receptor. This Drosophila melanogaster (Fruit fly) protein is Golgi SNAP receptor complex member 1 (Gos28).